Consider the following 389-residue polypeptide: Formate-dependent phosphoribosylglycinamide formyltransferase (389 aa).

Residues 12–13 (EL) and glutamate 72 contribute to the N(1)-(5-phospho-beta-D-ribosyl)glycinamide site. ATP contacts are provided by residues arginine 104, lysine 145, 150–155 (SSGKGQ), 185–188 (EAFV), and glutamate 193. One can recognise an ATP-grasp domain in the interval 109 to 300 (DLASKELGLR…EFELHARAVL (192 aa)). Positions 258 and 270 each coordinate Mg(2+). N(1)-(5-phospho-beta-D-ribosyl)glycinamide-binding positions include aspartate 277, lysine 348, and 355-356 (RR).

The protein belongs to the PurK/PurT family. Homodimer.

The catalysed reaction is N(1)-(5-phospho-beta-D-ribosyl)glycinamide + formate + ATP = N(2)-formyl-N(1)-(5-phospho-beta-D-ribosyl)glycinamide + ADP + phosphate + H(+). The protein operates within purine metabolism; IMP biosynthesis via de novo pathway; N(2)-formyl-N(1)-(5-phospho-D-ribosyl)glycinamide from N(1)-(5-phospho-D-ribosyl)glycinamide (formate route): step 1/1. Its function is as follows. Involved in the de novo purine biosynthesis. Catalyzes the transfer of formate to 5-phospho-ribosyl-glycinamide (GAR), producing 5-phospho-ribosyl-N-formylglycinamide (FGAR). Formate is provided by PurU via hydrolysis of 10-formyl-tetrahydrofolate. The protein is Formate-dependent phosphoribosylglycinamide formyltransferase of Chlorobium phaeobacteroides (strain DSM 266 / SMG 266 / 2430).